We begin with the raw amino-acid sequence, 141 residues long: Hemoglobin subunit alpha (141 aa).

Positions 1-141 (VLSPADKTNV…VSTVLTSKYR (141 aa)) constitute a Globin domain. S3 carries the post-translational modification Phosphoserine. K7 carries the post-translational modification N6-succinyllysine. Position 8 is a phosphothreonine (T8). K11 carries the N6-succinyllysine modification. K16 bears the N6-acetyllysine; alternate mark. An N6-succinyllysine; alternate modification is found at K16. At Y24 the chain carries Phosphotyrosine. A Phosphoserine modification is found at S35. An N6-succinyllysine modification is found at K40. Residue H58 coordinates O2. H87 contributes to the heme b binding site. S102 is subject to Phosphoserine. Position 108 is a phosphothreonine (T108). Phosphoserine is present on residues S124 and S131. A phosphothreonine mark is found at T134 and T137. S138 is subject to Phosphoserine.

The protein belongs to the globin family. In terms of assembly, heterotetramer of two alpha chains and two beta chains. As to expression, red blood cells.

Its function is as follows. Involved in oxygen transport from the lung to the various peripheral tissues. In terms of biological role, hemopressin acts as an antagonist peptide of the cannabinoid receptor CNR1. Hemopressin-binding efficiently blocks cannabinoid receptor CNR1 and subsequent signaling. In Cynopterus sphinx (Indian short-nosed fruit bat), this protein is Hemoglobin subunit alpha (HBA).